Reading from the N-terminus, the 187-residue chain is Large ribosomal subunit protein uL6 (187 aa).

The interval 151 to 170 is disordered; that stretch reads EAARIRSLRPPEPYKGKGIK.

The protein belongs to the universal ribosomal protein uL6 family. As to quaternary structure, part of the 50S ribosomal subunit.

In terms of biological role, this protein binds to the 23S rRNA, and is important in its secondary structure. It is located near the subunit interface in the base of the L7/L12 stalk, and near the tRNA binding site of the peptidyltransferase center. This chain is Large ribosomal subunit protein uL6, found in Chloroflexus aurantiacus (strain ATCC 29366 / DSM 635 / J-10-fl).